Here is an 81-residue protein sequence, read N- to C-terminus: Cortexin-3 (81 aa).

A helical membrane pass occupies residues 29–49 (MTFVFVILLFIFLGILIVRCF).

The protein belongs to the cortexin family.

Its subcellular location is the membrane. This is Cortexin-3 (CTXN3) from Homo sapiens (Human).